Here is a 302-residue protein sequence, read N- to C-terminus: Sulfate adenylyltransferase subunit 2 (302 aa).

Residues 280-302 are disordered; the sequence is RQGRLIDSDQSASMEQKKRQGYF.

It belongs to the PAPS reductase family. CysD subfamily. In terms of assembly, heterodimer composed of CysD, the smaller subunit, and CysN.

It catalyses the reaction sulfate + ATP + H(+) = adenosine 5'-phosphosulfate + diphosphate. It functions in the pathway sulfur metabolism; hydrogen sulfide biosynthesis; sulfite from sulfate: step 1/3. Its function is as follows. With CysN forms the ATP sulfurylase (ATPS) that catalyzes the adenylation of sulfate producing adenosine 5'-phosphosulfate (APS) and diphosphate, the first enzymatic step in sulfur assimilation pathway. APS synthesis involves the formation of a high-energy phosphoric-sulfuric acid anhydride bond driven by GTP hydrolysis by CysN coupled to ATP hydrolysis by CysD. This chain is Sulfate adenylyltransferase subunit 2, found in Shewanella frigidimarina (strain NCIMB 400).